Here is a 377-residue protein sequence, read N- to C-terminus: Stimulator of interferon genes protein 7 (377 aa).

4 helical membrane-spanning segments follow: residues 30 to 50, 57 to 77, 106 to 126, and 141 to 161; these read TAAITSAIIGVSSGAMLFLAV, THFLVFTAALLTLSFAFGELL, FTFDHGGCISLTAMFSALILC, and FAILFSVNCLVVPQLLFLVGL.

The protein belongs to the STING family.

The protein localises to the membrane. Functionally, facilitator of innate immune signaling that acts as a sensor of second messenger signals produced by cyclic GMP-AMP synthase-like receptors (cGLRs) and promotes the production of type I interferon. Innate immune response is triggered in response to nucleotides from viruses and bacteria delivered to the cytoplasm. Acts by binding cyclic dinucleotides: recognizes and binds a large variety of 2'-3'- and 3'-3' linked cyclic dinucleotides (2'-3'-cGAMP, 3'-3'-cGAMP, 2',3'-cUAMP, 3',3'-cUAMP and/or 3',3'-c-di-GMP) second messengers produced by cGLRs in response to nucleotides in the cytosol, such as double-stranded RNA (dsRNA). Upon binding to cyclic dinucleotides, oligomerizes and promotes the recruitment and subsequent activation of the transcription factor IRF3 to induce expression of type I interferon. The protein is Stimulator of interferon genes protein 7 of Stylophora pistillata (Smooth cauliflower coral).